We begin with the raw amino-acid sequence, 702 residues long: Polyphosphate kinase (702 aa).

Position 55 (Asn-55) interacts with ATP. Arg-389 and Arg-419 together coordinate Mg(2+). Catalysis depends on His-449, which acts as the Phosphohistidine intermediate. ATP-binding residues include Tyr-482, Arg-578, and His-606.

It belongs to the polyphosphate kinase 1 (PPK1) family. Mg(2+) serves as cofactor. In terms of processing, an intermediate of this reaction is the autophosphorylated ppk in which a phosphate is covalently linked to a histidine residue through a N-P bond.

The catalysed reaction is [phosphate](n) + ATP = [phosphate](n+1) + ADP. Catalyzes the reversible transfer of the terminal phosphate of ATP to form a long-chain polyphosphate (polyP). This is Polyphosphate kinase from Bacillus cereus (strain ATCC 14579 / DSM 31 / CCUG 7414 / JCM 2152 / NBRC 15305 / NCIMB 9373 / NCTC 2599 / NRRL B-3711).